A 76-amino-acid chain; its full sequence is Acyl carrier protein (76 aa).

In terms of domain architecture, Carrier spans 1 to 76 (MATFDKVKDI…DVVNYIEQNQ (76 aa)). S36 carries the O-(pantetheine 4'-phosphoryl)serine modification.

This sequence belongs to the acyl carrier protein (ACP) family. 4'-phosphopantetheine is transferred from CoA to a specific serine of apo-ACP by AcpS. This modification is essential for activity because fatty acids are bound in thioester linkage to the sulfhydryl of the prosthetic group.

Its subcellular location is the cytoplasm. It participates in lipid metabolism; fatty acid biosynthesis. Its function is as follows. Carrier of the growing fatty acid chain in fatty acid biosynthesis. In Natranaerobius thermophilus (strain ATCC BAA-1301 / DSM 18059 / JW/NM-WN-LF), this protein is Acyl carrier protein.